Reading from the N-terminus, the 495-residue chain is MFS transporter prlL (495 aa).

The tract at residues 1–24 (MAQSFANEHDPAKRAEERGHVGTI) is disordered. The segment covering 7 to 20 (NEHDPAKRAEERGH) has biased composition (basic and acidic residues). 11 helical membrane-spanning segments follow: residues 102–122 (IALM…NVLL), 130–150 (WIAI…GAHN), 159–179 (FLLG…LTFW), 189–209 (VAFI…IAYA), 224–244 (WLFI…LFFL), 292–312 (LWAH…LSLF), 329–349 (LMTV…SWSA), 356–376 (GLHS…SAVL), 386–406 (GCLI…LGWL), 418–438 (LAIA…GVWI), and 449–469 (PTGH…CVAL).

This sequence belongs to the major facilitator superfamily.

Its subcellular location is the cell membrane. Efflux pump that might be required for efficient secretion of pyrrolocin or other secondary metabolies produced by the pyrrolocin gene cluster. The polypeptide is MFS transporter prlL (Fungal sp. (strain NRRL 50135)).